The chain runs to 390 residues: GTPase Obg (390 aa).

Residues 1-159 (MKFVDEASIL…RELLLELMLL (159 aa)) form the Obg domain. A disordered region spans residues 127–147 (NTRFKSSVNRTPRQKTNGTPG). Polar residues predominate over residues 129–145 (RFKSSVNRTPRQKTNGT). Residues 160–333 (ADVGMLGMPN…LCWDVMTFII (174 aa)) enclose the OBG-type G domain. Residues 166–173 (GMPNAGKS), 191–195 (FTTLV), 213–216 (DIPG), 283–286 (NKID), and 314–316 (SAA) each bind GTP. Residues S173 and T193 each coordinate Mg(2+).

It belongs to the TRAFAC class OBG-HflX-like GTPase superfamily. OBG GTPase family. In terms of assembly, monomer. Requires Mg(2+) as cofactor.

The protein resides in the cytoplasm. An essential GTPase which binds GTP, GDP and possibly (p)ppGpp with moderate affinity, with high nucleotide exchange rates and a fairly low GTP hydrolysis rate. Plays a role in control of the cell cycle, stress response, ribosome biogenesis and in those bacteria that undergo differentiation, in morphogenesis control. The protein is GTPase Obg of Escherichia coli O7:K1 (strain IAI39 / ExPEC).